Consider the following 457-residue polypeptide: Glutamate--tRNA ligase 2 (457 aa).

The 'HIGH' region motif lies at 9–19 (PSPTGRIHIGN). The 'KMSKS' region motif lies at 250–254 (GLSKR). ATP is bound at residue K253.

The protein belongs to the class-I aminoacyl-tRNA synthetase family. Glutamate--tRNA ligase type 1 subfamily. As to quaternary structure, monomer.

The protein resides in the cytoplasm. It catalyses the reaction tRNA(Glu) + L-glutamate + ATP = L-glutamyl-tRNA(Glu) + AMP + diphosphate. Its function is as follows. Catalyzes the attachment of glutamate to tRNA(Glu) in a two-step reaction: glutamate is first activated by ATP to form Glu-AMP and then transferred to the acceptor end of tRNA(Glu). The sequence is that of Glutamate--tRNA ligase 2 from Mesorhizobium japonicum (strain LMG 29417 / CECT 9101 / MAFF 303099) (Mesorhizobium loti (strain MAFF 303099)).